An 856-amino-acid polypeptide reads, in one-letter code: DNA mismatch repair protein MutS (856 aa).

Residue 618–625 participates in ATP binding; the sequence is GPNMGGKS.

The protein belongs to the DNA mismatch repair MutS family.

Functionally, this protein is involved in the repair of mismatches in DNA. It is possible that it carries out the mismatch recognition step. This protein has a weak ATPase activity. In Shewanella baltica (strain OS223), this protein is DNA mismatch repair protein MutS.